A 261-amino-acid polypeptide reads, in one-letter code: Cytochrome c oxidase subunit 3 (261 aa).

Over 1–15 the chain is Mitochondrial matrix; it reads MTHQTHAYHMVNPSP. A helical transmembrane segment spans residues 16 to 34; sequence WPLTGALSALLMTSGLAMW. Over 35–40 the chain is Mitochondrial intermembrane; it reads FHFNSP. A helical transmembrane segment spans residues 41 to 66; sequence SLLLIGLVTNTLTMYQWWRDIVREGT. At 67–72 the chain is on the mitochondrial matrix side; that stretch reads FQGHHT. A helical transmembrane segment spans residues 73-105; the sequence is PIVQKGLRYGMILFIISEVFFFAGFFWAFYHSS. Residues 106-128 are Mitochondrial intermembrane-facing; that stretch reads LAPTPELGGCWPPTGINPLNPLE. A helical transmembrane segment spans residues 129–152; that stretch reads VPLLNTSVLLASGVSITWAHHSLM. Topologically, residues 153–155 are mitochondrial matrix; it reads EGN. Residues 156–183 form a helical membrane-spanning segment; it reads RKNMQQALAITILLGIYFTLLQASEYYE. Residues 184 to 190 are Mitochondrial intermembrane-facing; the sequence is TSFTISD. The chain crosses the membrane as a helical span at residues 191–223; the sequence is GVYGSTFFMATGFHGLHVIIGSTFLTVCLLRQF. Residues 224-232 are Mitochondrial matrix-facing; it reads NFHFTSNHH. A helical transmembrane segment spans residues 233–256; sequence FGFEAAAWYWHFVDVVWLFLYVSI. The Mitochondrial intermembrane portion of the chain corresponds to 257–261; it reads YWWGS.

This sequence belongs to the cytochrome c oxidase subunit 3 family. Component of the cytochrome c oxidase (complex IV, CIV), a multisubunit enzyme composed of 14 subunits. The complex is composed of a catalytic core of 3 subunits MT-CO1, MT-CO2 and MT-CO3, encoded in the mitochondrial DNA, and 11 supernumerary subunits COX4I, COX5A, COX5B, COX6A, COX6B, COX6C, COX7A, COX7B, COX7C, COX8 and NDUFA4, which are encoded in the nuclear genome. The complex exists as a monomer or a dimer and forms supercomplexes (SCs) in the inner mitochondrial membrane with NADH-ubiquinone oxidoreductase (complex I, CI) and ubiquinol-cytochrome c oxidoreductase (cytochrome b-c1 complex, complex III, CIII), resulting in different assemblies (supercomplex SCI(1)III(2)IV(1) and megacomplex MCI(2)III(2)IV(2)).

It localises to the mitochondrion inner membrane. It carries out the reaction 4 Fe(II)-[cytochrome c] + O2 + 8 H(+)(in) = 4 Fe(III)-[cytochrome c] + 2 H2O + 4 H(+)(out). In terms of biological role, component of the cytochrome c oxidase, the last enzyme in the mitochondrial electron transport chain which drives oxidative phosphorylation. The respiratory chain contains 3 multisubunit complexes succinate dehydrogenase (complex II, CII), ubiquinol-cytochrome c oxidoreductase (cytochrome b-c1 complex, complex III, CIII) and cytochrome c oxidase (complex IV, CIV), that cooperate to transfer electrons derived from NADH and succinate to molecular oxygen, creating an electrochemical gradient over the inner membrane that drives transmembrane transport and the ATP synthase. Cytochrome c oxidase is the component of the respiratory chain that catalyzes the reduction of oxygen to water. Electrons originating from reduced cytochrome c in the intermembrane space (IMS) are transferred via the dinuclear copper A center (CU(A)) of subunit 2 and heme A of subunit 1 to the active site in subunit 1, a binuclear center (BNC) formed by heme A3 and copper B (CU(B)). The BNC reduces molecular oxygen to 2 water molecules using 4 electrons from cytochrome c in the IMS and 4 protons from the mitochondrial matrix. This chain is Cytochrome c oxidase subunit 3 (MT-CO3), found in Oryctolagus cuniculus (Rabbit).